A 282-amino-acid polypeptide reads, in one-letter code: Phosphoglycerate mutase-like protein 1 (282 aa).

His-23 serves as the catalytic Tele-phosphohistidine intermediate. The active-site Proton donor/acceptor is Glu-135.

The protein belongs to the phosphoglycerate mutase family.

Functionally, may play a role in carbohydrates metabolism. This chain is Phosphoglycerate mutase-like protein 1, found in Arabidopsis thaliana (Mouse-ear cress).